A 72-amino-acid polypeptide reads, in one-letter code: MKKSILFIFLSVLSFSPFAQDAKPAGSSKEKITLESKKCNIVKKNNESSPESMNSSNYCCELCCNPACTGCY.

The N-terminal stretch at 1–19 (MKKSILFIFLSVLSFSPFA) is a signal peptide. The propeptide occupies 20–53 (QDAKPAGSSKEKITLESKKCNIVKKNNESSPESM). Cystine bridges form between cysteine 59/cysteine 64, cysteine 60/cysteine 68, and cysteine 63/cysteine 71.

This sequence belongs to the heat-stable enterotoxin family.

It localises to the secreted. Its function is as follows. Toxin which activates the particulate form of guanylate cyclase and increases cyclic GMP levels within the host intestinal epithelial cells. This chain is Heat-stable enterotoxin A2 (sta2), found in Escherichia coli.